The following is a 1203-amino-acid chain: Cingulin (1203 aa).

A head region spans residues 7–357; the sequence is MAEPRGPVDH…VMVSSGSTKA (351 aa). The segment at 25–48 is disordered; the sequence is EPVSGAEMGTLRRGGRRPAKDARA. The short motif at 48-62 is the ZIM element; sequence ASTYGVAVRVQGIAG. Residues 54–67 form an interaction with TJP1/ZO1 region; sequence AVRVQGIAGQPFVV. Positions 89–127 are disordered; the sequence is GASGALSSDLELPENPYSQVKGFPAPSQSSTSDEEPGAY. 13 positions are modified to phosphoserine: S95, S96, S135, S137, S140, S155, S165, S214, S217, S258, S276, S338, and S351. The tract at residues 186 to 266 is disordered; sequence DSQLGGQARG…LSPLSGFSRS (81 aa). Residues 207–231 are compositionally biased toward basic and acidic residues; that stretch reads EQRKRSKSLDSRLPRDTFEERERQS. The segment covering 232–266 has biased composition (polar residues); that stretch reads TNHWTSSTKYDNHVGTSKQPAQSQNLSPLSGFSRS. Positions 358–1160 form a coiled coil; it reads VAGQGELTRK…SLEKDSWRKA (803 aa). K579 is modified (N6-acetyllysine). T712 carries the post-translational modification Phosphothreonine. Disordered stretches follow at residues 1034–1053 and 1154–1181; these read LASSEGFQKPSASLSQLESQ and KDSWRKASRSAAESALKNEGLSSDEEFD. Positions 1044-1053 are enriched in low complexity; it reads SASLSQLESQ. Residues 1161–1203 are tail; sequence SRSAAESALKNEGLSSDEEFDSVYDPSSIASLLTESNLQTSSC. Phosphoserine is present on residues S1175, S1176, and S1182.

It belongs to the cingulin family. In terms of assembly, homodimer. Interacts with TJP1/ZO1. Interacts with SPEF1. Localized on the cytoplasmic face of tight junctions of polarized epithelia and some endothelia. Expressed in pancreas, kidney, liver and lung, but not in skeletal muscle, placenta, brain or heart.

The protein localises to the cell junction. It localises to the tight junction. Functionally, probably plays a role in the formation and regulation of the tight junction (TJ) paracellular permeability barrier. The chain is Cingulin from Homo sapiens (Human).